Consider the following 248-residue polypeptide: 5'-nucleotidase SurE (248 aa).

A divalent metal cation contacts are provided by Asp8, Asp9, Ser39, and Asn91.

This sequence belongs to the SurE nucleotidase family. Requires a divalent metal cation as cofactor.

The protein resides in the cytoplasm. It carries out the reaction a ribonucleoside 5'-phosphate + H2O = a ribonucleoside + phosphate. Functionally, nucleotidase that shows phosphatase activity on nucleoside 5'-monophosphates. The protein is 5'-nucleotidase SurE of Neisseria gonorrhoeae (strain ATCC 700825 / FA 1090).